We begin with the raw amino-acid sequence, 54 residues long: MGKYKPPAERRFGKGVQLCKRCGSRDSVIQKYGLYLCRQCFREVAYPMGFRKTR.

Positions 19, 22, 37, and 40 each coordinate Zn(2+).

The protein belongs to the universal ribosomal protein uS14 family. Zinc-binding uS14 subfamily. In terms of assembly, part of the 30S ribosomal subunit. The cofactor is Zn(2+).

In terms of biological role, binds 16S rRNA, required for the assembly of 30S particles. In Sulfolobus acidocaldarius (strain ATCC 33909 / DSM 639 / JCM 8929 / NBRC 15157 / NCIMB 11770), this protein is Small ribosomal subunit protein uS14.